The chain runs to 500 residues: Palmitoleoyl-protein carboxylesterase notum1a (500 aa).

Residues 1–26 (MKRSLWVMQVLHWAVMLALVQCGALG) form the signal peptide. A glycan (N-linked (GlcNAc...) asparagine) is linked at Asn-101. Active-site charge relay system residues include Ser-237, Asp-344, and His-393.

Belongs to the pectinacetylesterase family. Notum subfamily.

It localises to the secreted. It catalyses the reaction [Wnt protein]-O-(9Z)-hexadecenoyl-L-serine + H2O = [Wnt protein]-L-serine + (9Z)-hexadecenoate + H(+). In terms of biological role, carboxylesterase that acts as a key negative regulator of the Wnt signaling pathway. Acts by specifically mediating depalmitoleoylation of WNT proteins. Serine palmitoleoylation of WNT proteins is required for efficient binding to frizzled receptors. This is Palmitoleoyl-protein carboxylesterase notum1a from Danio rerio (Zebrafish).